The primary structure comprises 130 residues: Large ribosomal subunit protein uL14 (130 aa).

It belongs to the universal ribosomal protein uL14 family. Part of the 50S ribosomal subunit. Forms a cluster with proteins L3 and L19. In the 70S ribosome, L14 and L19 interact and together make contacts with the 16S rRNA in bridges B5 and B8.

Functionally, binds to 23S rRNA. Forms part of two intersubunit bridges in the 70S ribosome. This is Large ribosomal subunit protein uL14 from Helicobacter pylori (strain P12).